The following is a 435-amino-acid chain: MSNIVAIVGRPNVGKSTFFNRLVGARIAIMDDESGVTRDRHYGEAEWCGKFFTVIDTGGYVTGSDDIFEGQIRDQVDIAIDEADVILFLVDSDVGVHHLDQEFANKIRRSKKPVILVANKSDNNKRLHMSAEFYELGMGEVWPISSQNGTGTGELLDEVISHFKDEGEEDPNKGIPRIAVLGRPNAGKSSYVNALLGTNRSIVTDQAGTTRDSITSHYNVFGKEFIFVDTAGIRKKSRIKEDVEYYSILRSVKALEESDVCVIMIDAERGIESQDMNIIWMAHNNKKGIVILVNKWDLIEKDSKTAQVFQENIREALKPIDYPLIMFISVLNKQRLFQSVEAIMKVYENRGKRIPTSELNDKILKEIDYNPPPATKQKYVKIKYVTQLPTKSPTFAFFCNLPQYVGESYSRFLEHKIRGYFDFEGVPISIVYRKK.

2 EngA-type G domains span residues 3–167 (NIVA…KDEG) and 176–351 (PRIA…ENRG). GTP-binding positions include 9-16 (GRPNVGKS), 56-60 (DTGGY), 119-122 (NKSD), 182-189 (GRPNAGKS), 229-233 (DTAGI), and 294-297 (NKWD). The region spanning 352–435 (KRIPTSELND…VPISIVYRKK (84 aa)) is the KH-like domain.

Belongs to the TRAFAC class TrmE-Era-EngA-EngB-Septin-like GTPase superfamily. EngA (Der) GTPase family. As to quaternary structure, associates with the 50S ribosomal subunit.

GTPase that plays an essential role in the late steps of ribosome biogenesis. This is GTPase Der from Cytophaga hutchinsonii (strain ATCC 33406 / DSM 1761 / CIP 103989 / NBRC 15051 / NCIMB 9469 / D465).